The sequence spans 97 residues: DNA-directed RNA polymerase subunit omega (97 aa).

This sequence belongs to the RNA polymerase subunit omega family. In terms of assembly, the RNAP catalytic core consists of 2 alpha, 1 beta, 1 beta' and 1 omega subunit. When a sigma factor is associated with the core the holoenzyme is formed, which can initiate transcription.

The catalysed reaction is RNA(n) + a ribonucleoside 5'-triphosphate = RNA(n+1) + diphosphate. Functionally, promotes RNA polymerase assembly. Latches the N- and C-terminal regions of the beta' subunit thereby facilitating its interaction with the beta and alpha subunits. The protein is DNA-directed RNA polymerase subunit omega of Coxiella burnetii (strain CbuK_Q154) (Coxiella burnetii (strain Q154)).